The primary structure comprises 692 residues: Elongation factor G (692 aa).

The tr-type G domain occupies 8-282 (EKTRNIGIMA…AVIDYLPSPL (275 aa)). Residues 17 to 24 (AHVDAGKT), 81 to 85 (DTPGH), and 135 to 138 (NKMD) contribute to the GTP site.

This sequence belongs to the TRAFAC class translation factor GTPase superfamily. Classic translation factor GTPase family. EF-G/EF-2 subfamily.

The protein localises to the cytoplasm. Catalyzes the GTP-dependent ribosomal translocation step during translation elongation. During this step, the ribosome changes from the pre-translocational (PRE) to the post-translocational (POST) state as the newly formed A-site-bound peptidyl-tRNA and P-site-bound deacylated tRNA move to the P and E sites, respectively. Catalyzes the coordinated movement of the two tRNA molecules, the mRNA and conformational changes in the ribosome. This is Elongation factor G from Streptococcus agalactiae serotype Ia (strain ATCC 27591 / A909 / CDC SS700).